A 257-amino-acid chain; its full sequence is GTP cyclohydrolase FolE2 (257 aa).

Belongs to the GTP cyclohydrolase IV family.

The catalysed reaction is GTP + H2O = 7,8-dihydroneopterin 3'-triphosphate + formate + H(+). It functions in the pathway cofactor biosynthesis; 7,8-dihydroneopterin triphosphate biosynthesis; 7,8-dihydroneopterin triphosphate from GTP: step 1/1. Functionally, converts GTP to 7,8-dihydroneopterin triphosphate. This Syntrophobacter fumaroxidans (strain DSM 10017 / MPOB) protein is GTP cyclohydrolase FolE2.